A 274-amino-acid polypeptide reads, in one-letter code: MQQLQNVIESAFERRADITPANVDTVTREAVNQVIGLLDSGALRVAEKIDGQWVTHQWLKKAVLLSFRINDNKVMDGAETRYYDKVPMKFADYDEARFQKEGFRVVPPATVRQGAFIARNTVLMPSYVNIGAYVDEGTMVDTWATVGSCAQIGKNVHLSGGVGIGGVLEPLQANPTIIEDNCFIGARSEVVEGVIVEEGSVISMGVYLGQSTRIYDRETGEIHYGRVPAGSVVVSGNLPSKDGSYSLYCAVIVKKVDAKTRGKVGINELLRTID.

Substrate contacts are provided by Arg-104 and Asp-141.

It belongs to the transferase hexapeptide repeat family. As to quaternary structure, homotrimer.

It localises to the cytoplasm. The enzyme catalyses (S)-2,3,4,5-tetrahydrodipicolinate + succinyl-CoA + H2O = (S)-2-succinylamino-6-oxoheptanedioate + CoA. The protein operates within amino-acid biosynthesis; L-lysine biosynthesis via DAP pathway; LL-2,6-diaminopimelate from (S)-tetrahydrodipicolinate (succinylase route): step 1/3. Its activity is regulated as follows. Inhibited by p-(chloromercuri)benzenesulfonic acid and cobalt. The chain is 2,3,4,5-tetrahydropyridine-2,6-dicarboxylate N-succinyltransferase (dapD) from Unknown prokaryotic organism.